The following is a 283-amino-acid chain: Urease accessory protein UreD 2 (283 aa).

Residues 1–11 (MGRRAPDRLDR) show a composition bias toward basic and acidic residues. The segment at 1–30 (MGRRAPDRLDRGVTTTSPRTQAPPQAGRGV) is disordered. Over residues 13–23 (VTTTSPRTQAP) the composition is skewed to polar residues.

The protein belongs to the UreD family. As to quaternary structure, ureD, UreF and UreG form a complex that acts as a GTP-hydrolysis-dependent molecular chaperone, activating the urease apoprotein by helping to assemble the nickel containing metallocenter of UreC. The UreE protein probably delivers the nickel.

The protein localises to the cytoplasm. Its function is as follows. Required for maturation of urease via the functional incorporation of the urease nickel metallocenter. This is Urease accessory protein UreD 2 from Saccharopolyspora erythraea (strain ATCC 11635 / DSM 40517 / JCM 4748 / NBRC 13426 / NCIMB 8594 / NRRL 2338).